A 142-amino-acid polypeptide reads, in one-letter code: Large ribosomal subunit protein uL16 (142 aa).

The protein belongs to the universal ribosomal protein uL16 family. Part of the 50S ribosomal subunit.

In terms of biological role, binds 23S rRNA and is also seen to make contacts with the A and possibly P site tRNAs. The protein is Large ribosomal subunit protein uL16 of Trichormus variabilis (strain ATCC 29413 / PCC 7937) (Anabaena variabilis).